We begin with the raw amino-acid sequence, 652 residues long: MATDAHKETLEFQAEVQQLLHLMIHSLYSNKDIFLRELISNASDAIDKLRFQSLQDESLLEGEGDLRIRVSVDKDARTITVADNGIGMTRDEVAENLGTIARSGTKAFLDQLTGDQQKDAKLIGQFGVGFYSAFVVAEHVTVHTRKAGLGAEHGVRWSSDGKGAYTLENEEVAERGTRVVLTLPESQSEYLDDWRLKGIIRRYSDHIDVPIQMPAQAEDKDEPEDEAEKAEAAETWETVNNTNALWMRPKSEISDDDYKAFYKHVAHDFDDPMVWLHNHVEGRQSYTSLLYIPKNPPFDLYEREPAHGIKLYVRRVFIMEDTEKLMPRYLRFVRGLVDSDDLPLNVSRELLQHNPLLDKIRSASVKRILDRLEKMAKNEPEQYAEFYGNFGKVLKEGVAEDFANRERIAKLLRFSTTQDENETPDVSLDDYIARMKEGQEAIYYVTAESFNAARNSPHLEVFRKKGVEVLLLPDPVDEWVITHLNEYDGKPLKSVAKGGLDLGELEDQAEKKAAEEATESHKDLLEKLKGALEDKVSEVRVSTRLTDSPACLVVGEYDFGMGMQRLLKAAGHAMPQGKPALEINIDHPIVQRMDTGLDDARFSDWAAVLYDQALLTEGGQLEDPAAFVKRVNALLTEQARAGEAKSNAARGD.

Residues 1 to 348 are a; substrate-binding; the sequence is MATDAHKETL…SDDLPLNVSR (348 aa). Positions 349–565 are b; sequence ELLQHNPLLD…EYDFGMGMQR (217 aa). The c stretch occupies residues 566 to 652; that stretch reads LLKAAGHAMP…EAKSNAARGD (87 aa).

This sequence belongs to the heat shock protein 90 family. In terms of assembly, homodimer.

The protein localises to the cytoplasm. In terms of biological role, molecular chaperone. Has ATPase activity. This Alkalilimnicola ehrlichii (strain ATCC BAA-1101 / DSM 17681 / MLHE-1) protein is Chaperone protein HtpG.